Consider the following 675-residue polypeptide: Zeaxanthin epoxidase, chloroplastic (675 aa).

The transit peptide at 1-25 directs the protein to the chloroplast; that stretch reads MASTVLYNSLTTSTTVFLRSHLPIS. FAD contacts are provided by residues 92–120 and 370–383; these read RILV…KVFE and KLTW…LLGD. In terms of domain architecture, FHA spans 558-622; sequence ICLSRKEDEP…HGTWITDNEG (65 aa).

The cofactor is FAD.

It localises to the plastid. The protein localises to the chloroplast thylakoid membrane. It catalyses the reaction all-trans-zeaxanthin + 4 reduced [2Fe-2S]-[ferredoxin] + 2 O2 + 4 H(+) = all-trans-violaxanthin + 4 oxidized [2Fe-2S]-[ferredoxin] + 2 H2O. The protein operates within plant hormone biosynthesis; abscisate biosynthesis. Inhibited by diphenyleneiodonium (DPI). Functionally, converts zeaxanthin into antheraxanthin and subsequently violaxanthin. Involved in the epoxidation of zeaxanthin. The protein is Zeaxanthin epoxidase, chloroplastic of Spinacia oleracea (Spinach).